The sequence spans 308 residues: Polyprenyl-phosphate transporter (308 aa).

8 consecutive transmembrane segments (helical) span residues 15–35, 69–89, 91–111, 130–150, 163–183, 200–220, 228–248, and 282–302; these read GLAM…IAFI, INGL…ATLA, LISW…FGLI, LLWL…KPLH, AIAI…LLLI, ILLI…HILS, DVTL…IWPW, and PSQW…VLGL.

The protein belongs to the PopT family.

The protein localises to the cell inner membrane. Active in alkaline conditions. In terms of biological role, flippase that catalyzes the transport of undecaprenyl phosphate (UndP) across the cytoplasmic membrane, from the external side to the cytoplasmic side. Is involved in UndP recycling during peptidoglycan synthesis. Required for cell shape maintenance at alkaline pH and peptidoglycan maintenance. Required by the cholera pathogen for growth and cell shape maintenance in the intestine. The polypeptide is Polyprenyl-phosphate transporter (Vibrio cholerae serotype O1 (strain ATCC 39315 / El Tor Inaba N16961)).